A 629-amino-acid polypeptide reads, in one-letter code: tRNA uridine 5-carboxymethylaminomethyl modification enzyme MnmG (629 aa).

Residue Gly-11–Gly-16 participates in FAD binding. Gly-273 to Phe-287 is a binding site for NAD(+).

The protein belongs to the MnmG family. Homodimer. Heterotetramer of two MnmE and two MnmG subunits. The cofactor is FAD.

The protein resides in the cytoplasm. Functionally, NAD-binding protein involved in the addition of a carboxymethylaminomethyl (cmnm) group at the wobble position (U34) of certain tRNAs, forming tRNA-cmnm(5)s(2)U34. The sequence is that of tRNA uridine 5-carboxymethylaminomethyl modification enzyme MnmG from Mycoplasma capricolum subsp. capricolum (strain California kid / ATCC 27343 / NCTC 10154).